Here is a 113-residue protein sequence, read N- to C-terminus: Protein USP1 (113 aa).

Positions 1–18 are cleaved as a signal peptide; the sequence is MKITMLFAALSAASGAFA. A run of 6 repeats spans residues 32–37, 40–45, 46–49, 50–53, 59–65, and 69–75. A 2 X 6 AA repeats region spans residues 32–45; it reads IGAGVGIGIGAGVG. Residues 46–53 form a 2 X 4 AA approximate tandem repeats region; that stretch reads PYGYPYGA. Residues 59–75 form a 2 X 7 AA approximate repeats region; sequence LQLLPLRWLSLQWIPLR.

The protein resides in the secreted. The polypeptide is Protein USP1 (USP1) (Puccinia graminis (Black stem rust fungus)).